We begin with the raw amino-acid sequence, 87 residues long: Small ribosomal subunit protein bS20 (87 aa).

Residues 1–11 (MANIKSAKKRA) show a composition bias toward basic residues. The interval 1–27 (MANIKSAKKRAVQSEKRRQHNASQRSM) is disordered.

This sequence belongs to the bacterial ribosomal protein bS20 family.

In terms of biological role, binds directly to 16S ribosomal RNA. The protein is Small ribosomal subunit protein bS20 of Histophilus somni (strain 129Pt) (Haemophilus somnus).